We begin with the raw amino-acid sequence, 83 residues long: Putative membrane protein insertion efficiency factor (83 aa).

The interval 64–83 (GGFDPVPLKKDKNSKTTHHH) is disordered.

Belongs to the UPF0161 family.

It localises to the cell membrane. Functionally, could be involved in insertion of integral membrane proteins into the membrane. In Staphylococcus epidermidis (strain ATCC 12228 / FDA PCI 1200), this protein is Putative membrane protein insertion efficiency factor.